The chain runs to 450 residues: Probable ECA polymerase (450 aa).

11 helical membrane-spanning segments follow: residues 6-26, 37-57, 63-83, 120-140, 155-175, 181-201, 207-227, 228-248, 341-361, 378-398, and 410-430; these read FSGLLVVWLLSTLFIATLTWF, VFFSLLFLLTFFFGFPLTSVL, VGVAPPEILLQALLSAACFYA, LMGIALVSVGIFFMHNGFLLF, GVALKRFFYFFIPAMLVIYFL, AWLFFLVSTVAFGLLTYMIVG, IIIAFAIFLFIGIIRGWISLW, MLVAAGVLGIVGMFWLALKRY, LVVMGGALFIPLGAVAVGLII, YKAAILHSFCFGAIFNMIVLA, and VFFLVIFGACLLVAKLLFWLF.

The protein belongs to the WzyE family. In terms of assembly, probably part of a complex composed of WzxE, WzyE and WzzE.

Its subcellular location is the cell inner membrane. The protein operates within bacterial outer membrane biogenesis; enterobacterial common antigen biosynthesis. In terms of biological role, probably involved in the polymerization of enterobacterial common antigen (ECA) trisaccharide repeat units. The polypeptide is Probable ECA polymerase (Citrobacter koseri (strain ATCC BAA-895 / CDC 4225-83 / SGSC4696)).